We begin with the raw amino-acid sequence, 95 residues long: Sec-independent protein translocase protein TatA (95 aa).

A helical membrane pass occupies residues 1 to 21 (MGGISIWQLLIIALIVVLLFG). Positions 50–61 (KALEDNAADKPA) are enriched in basic and acidic residues. Positions 50–95 (KALEDNAADKPAADAAKVTETAKVAETAPVAETAEKKAESKGKEQA) are disordered. Low complexity predominate over residues 62 to 81 (ADAAKVTETAKVAETAPVAE). Over residues 82–95 (TAEKKAESKGKEQA) the composition is skewed to basic and acidic residues.

It belongs to the TatA/E family. As to quaternary structure, the Tat system comprises two distinct complexes: a TatABC complex, containing multiple copies of TatA, TatB and TatC subunits, and a separate TatA complex, containing only TatA subunits. Substrates initially bind to the TatABC complex, which probably triggers association of the separate TatA complex to form the active translocon.

Its subcellular location is the cell inner membrane. Part of the twin-arginine translocation (Tat) system that transports large folded proteins containing a characteristic twin-arginine motif in their signal peptide across membranes. TatA could form the protein-conducting channel of the Tat system. This chain is Sec-independent protein translocase protein TatA, found in Shewanella halifaxensis (strain HAW-EB4).